We begin with the raw amino-acid sequence, 245 residues long: Carboxymethylenebutenolidase homolog (245 aa).

Position 2 is an N-acetylalanine (Ala2). Catalysis depends on residues Cys132, Asp179, and His212. At Ser223 the chain carries Phosphoserine.

Belongs to the dienelactone hydrolase family.

The protein localises to the cytoplasm. The protein resides in the cytosol. Its function is as follows. Cysteine hydrolase. The protein is Carboxymethylenebutenolidase homolog (Cmbl) of Mus musculus (Mouse).